Here is a 250-residue protein sequence, read N- to C-terminus: Ubiquinone/menaquinone biosynthesis C-methyltransferase UbiE (250 aa).

S-adenosyl-L-methionine contacts are provided by residues threonine 74, aspartate 94, 122–123, and serine 139; that span reads DA.

This sequence belongs to the class I-like SAM-binding methyltransferase superfamily. MenG/UbiE family.

It catalyses the reaction a 2-demethylmenaquinol + S-adenosyl-L-methionine = a menaquinol + S-adenosyl-L-homocysteine + H(+). The enzyme catalyses a 2-methoxy-6-(all-trans-polyprenyl)benzene-1,4-diol + S-adenosyl-L-methionine = a 5-methoxy-2-methyl-3-(all-trans-polyprenyl)benzene-1,4-diol + S-adenosyl-L-homocysteine + H(+). It functions in the pathway quinol/quinone metabolism; menaquinone biosynthesis; menaquinol from 1,4-dihydroxy-2-naphthoate: step 2/2. It participates in cofactor biosynthesis; ubiquinone biosynthesis. Methyltransferase required for the conversion of demethylmenaquinol (DMKH2) to menaquinol (MKH2) and the conversion of 2-polyprenyl-6-methoxy-1,4-benzoquinol (DDMQH2) to 2-polyprenyl-3-methyl-6-methoxy-1,4-benzoquinol (DMQH2). This chain is Ubiquinone/menaquinone biosynthesis C-methyltransferase UbiE, found in Roseobacter denitrificans (strain ATCC 33942 / OCh 114) (Erythrobacter sp. (strain OCh 114)).